Here is a 214-residue protein sequence, read N- to C-terminus: Probable transaldolase (214 aa).

The active-site Schiff-base intermediate with substrate is Lys83.

The protein belongs to the transaldolase family. Type 3B subfamily.

It is found in the cytoplasm. It catalyses the reaction D-sedoheptulose 7-phosphate + D-glyceraldehyde 3-phosphate = D-erythrose 4-phosphate + beta-D-fructose 6-phosphate. The protein operates within carbohydrate degradation; pentose phosphate pathway; D-glyceraldehyde 3-phosphate and beta-D-fructose 6-phosphate from D-ribose 5-phosphate and D-xylulose 5-phosphate (non-oxidative stage): step 2/3. Functionally, transaldolase is important for the balance of metabolites in the pentose-phosphate pathway. This chain is Probable transaldolase, found in Carboxydothermus hydrogenoformans (strain ATCC BAA-161 / DSM 6008 / Z-2901).